The following is a 307-amino-acid chain: NAD kinase 2 (307 aa).

The active-site Proton acceptor is Asp-77. Residues 77–78, 151–152, Asp-181, 192–197, and Asn-251 contribute to the NAD(+) site; these read DG, NE, and TAYALS.

It belongs to the NAD kinase family. The cofactor is a divalent metal cation.

It localises to the cytoplasm. It carries out the reaction NAD(+) + ATP = ADP + NADP(+) + H(+). In terms of biological role, involved in the regulation of the intracellular balance of NAD and NADP, and is a key enzyme in the biosynthesis of NADP. Catalyzes specifically the phosphorylation on 2'-hydroxyl of the adenosine moiety of NAD to yield NADP. In Thermosynechococcus vestitus (strain NIES-2133 / IAM M-273 / BP-1), this protein is NAD kinase 2.